The sequence spans 316 residues: N-acetyl-gamma-glutamyl-phosphate reductase (316 aa).

Cysteine 136 is a catalytic residue.

Belongs to the NAGSA dehydrogenase family. Type 1 subfamily.

Its subcellular location is the cytoplasm. The enzyme catalyses N-acetyl-L-glutamate 5-semialdehyde + phosphate + NADP(+) = N-acetyl-L-glutamyl 5-phosphate + NADPH + H(+). Its pathway is amino-acid biosynthesis; L-arginine biosynthesis; N(2)-acetyl-L-ornithine from L-glutamate: step 3/4. Functionally, catalyzes the NADPH-dependent reduction of N-acetyl-5-glutamyl phosphate to yield N-acetyl-L-glutamate 5-semialdehyde. The polypeptide is N-acetyl-gamma-glutamyl-phosphate reductase (Xanthomonas oryzae pv. oryzae (strain MAFF 311018)).